A 561-amino-acid polypeptide reads, in one-letter code: MAVYVNSTTGPPPSVGRNSAGFHPSIWGDKFITSSNSAVQKTDVDRKEEEKLQLLKQEVKKMLTAGDTSQQDLICLIDDIQRLGLSYHFEAEIDTLLQHVKHSYVEHYGKKNHDNLHDVALSFRLLRQEGHNISSDVFSKFQDSDGKFKEELVEDVRGMLSLFEAAHLRVHGENILEDALEFTTTHLNSYLNSNPSSSLADLVRRALKYPLRKSFNRMVARHYISVYHKFDWHKQVLLDMAKCDFNLVQKVHQNELGYITRWWKDLDFTNKLPFARDRVVECYFWITGVYFEPRYAAPRKFLTEVMSLTSIIDDIYDVYGTPDELVQLADAIDKWDISILDQLPEYVRHAYKPLLDTFAEAEEEMANEGLPTYGVDYAKEAFKRLAVAYLQETKWLQAQYIPTFEEYLSVALVSAGGNMLSVSSFVRMGNIATREAFEWLSKDPLIANGLSVIIRLSDDIVGHEFESQRPHIPSAVECYMKSHDVTKETAYAELQKPIIKAWKDMNEGCLHPEAPPKPLLERVLNLARVLNFLYDGHDGYTHSSTRTKDIITTAFINPIPL.

D313, D317, D458, and E466 together coordinate Mg(2+). The DDXXD motif motif lies at 313–317 (DDIYD).

It belongs to the terpene synthase family. Tpsa subfamily. Requires Mn(2+) as cofactor. Mg(2+) is required as a cofactor.

Its subcellular location is the cytoplasm. It catalyses the reaction (2E,6E)-farnesyl diphosphate = (1S,8aR)-delta-cadinene + diphosphate. It participates in secondary metabolite biosynthesis; terpenoid biosynthesis. In terms of biological role, involved in the biosynthesis of delta-cadinene. This Thapsia garganica (Deadly carrot) protein is Sesquiterpene synthase 1 (STS1).